Consider the following 101-residue polypeptide: Glutaredoxin-1 (101 aa).

One can recognise a Glutaredoxin domain in the interval 3-101 (DSFVQSKLRD…MMLRQIGALV (99 aa)). An intrachain disulfide couples cysteine 23 to cysteine 26.

It belongs to the glutaredoxin family.

It localises to the cytoplasm. Functionally, has a glutathione-disulfide oxidoreductase activity in the presence of NADPH and glutathione reductase. Reduces low molecular weight disulfides and proteins. This Gallus gallus (Chicken) protein is Glutaredoxin-1 (GLRX).